The sequence spans 543 residues: CTP synthase (543 aa).

Positions 1-265 are amidoligase domain; it reads MARYIFITGG…DEEVLAAFGI (265 aa). S13 is a CTP binding site. S13 lines the UTP pocket. 14–19 lines the ATP pocket; sequence SLGKGL. Y54 lines the L-glutamine pocket. Position 71 (D71) interacts with ATP. The Mg(2+) site is built by D71 and E139. Residues 146 to 148, 186 to 191, and K222 each bind CTP; these read DIE and KTKPTQ. UTP-binding positions include 186–191 and K222; that span reads KTKPTQ. An ATP-binding site is contributed by 238–240; it reads RDA. The 252-residue stretch at 291 to 542 folds into the Glutamine amidotransferase type-1 domain; it reads TIAIVGKYTG…IEAAMAQSRL (252 aa). G353 provides a ligand contact to L-glutamine. Catalysis depends on C380, which acts as the Nucleophile; for glutamine hydrolysis. Residues 381–384, E404, and R470 each bind L-glutamine; that span reads FGMQ. Active-site residues include H515 and E517.

This sequence belongs to the CTP synthase family. As to quaternary structure, homotetramer.

It catalyses the reaction UTP + L-glutamine + ATP + H2O = CTP + L-glutamate + ADP + phosphate + 2 H(+). The enzyme catalyses L-glutamine + H2O = L-glutamate + NH4(+). The catalysed reaction is UTP + NH4(+) + ATP = CTP + ADP + phosphate + 2 H(+). It participates in pyrimidine metabolism; CTP biosynthesis via de novo pathway; CTP from UDP: step 2/2. Its activity is regulated as follows. Allosterically activated by GTP, when glutamine is the substrate; GTP has no effect on the reaction when ammonia is the substrate. The allosteric effector GTP functions by stabilizing the protein conformation that binds the tetrahedral intermediate(s) formed during glutamine hydrolysis. Inhibited by the product CTP, via allosteric rather than competitive inhibition. Catalyzes the ATP-dependent amination of UTP to CTP with either L-glutamine or ammonia as the source of nitrogen. Regulates intracellular CTP levels through interactions with the four ribonucleotide triphosphates. The chain is CTP synthase from Rhodopseudomonas palustris (strain BisA53).